A 187-amino-acid polypeptide reads, in one-letter code: UPF0301 protein WIGBR1650 (187 aa).

This sequence belongs to the UPF0301 (AlgH) family.

The chain is UPF0301 protein WIGBR1650 from Wigglesworthia glossinidia brevipalpis.